The sequence spans 72 residues: Protein kish-A (72 aa).

A signal peptide spans 1-26 (MSAIFNFQSLLTVILLLICTCAYIRS). Topologically, residues 27–53 (LAPSLLDKNKSGLLGIFWKCARIGERK) are extracellular. N35 carries N-linked (GlcNAc...) asparagine glycosylation. Residues 54–71 (SPYVAVCCVVMAFSILFM) form a helical membrane-spanning segment. Position 72 (Q72) is a topological domain, cytoplasmic.

It belongs to the KISH family.

It localises to the golgi apparatus membrane. Involved in the early part of the secretory pathway. The polypeptide is Protein kish-A (TMEM167A) (Taeniopygia guttata (Zebra finch)).